The chain runs to 206 residues: Protease (206 aa).

Residues histidine 54, aspartate 71, and cysteine 122 contribute to the active site.

It belongs to the peptidase C5 family. In terms of assembly, interacts with protease cofactor pVI-C; this interaction is necessary for protease activation.

It localises to the virion. The protein localises to the host nucleus. The enzyme catalyses Cleaves proteins of the adenovirus and its host cell at two consensus sites: -Yaa-Xaa-Gly-Gly-|-Xaa- and -Yaa-Xaa-Gly-Xaa-|-Gly- (in which Yaa is Met, Ile or Leu, and Xaa is any amino acid).. Requires DNA and protease cofactor for maximal activation. Inside nascent virions, becomes partially activated by binding to the viral DNA, allowing it to cleave the cofactor that binds to the protease and fully activates it. Actin, like the viral protease cofactor, seems to act as a cofactor in the cleavage of cytokeratin 18 and of actin itself. Functionally, cleaves viral precursor proteins (pTP, pIIIa, pVI, pVII, pVIII, and pX) inside newly assembled particles giving rise to mature virions. Protease complexed to its cofactor slides along the viral DNA to specifically locate and cleave the viral precursors. Mature virions have a weakened organization compared to the unmature virions, thereby facilitating subsequent uncoating. Without maturation, the particle lacks infectivity and is unable to uncoat. Late in adenovirus infection, in the cytoplasm, may participate in the cytoskeleton destruction. Cleaves host cell cytoskeletal keratins K7 and K18. The sequence is that of Protease from Homo sapiens (Human).